The chain runs to 624 residues: MPRPRPLLLAVMAATLADIILAADPAPAGPAPRPPNFLLIMADDLGIGDLGCYGNKTLRTPHLDRLAREGVKLTQHLAAAPLCTPSRAAFLTGRYPPRSGMAAHGRVGVYLFTASSGGLPPSEVTMARLLKGRGYATALIGKWHLGLSCRGATDFCHHPLRHGFDRFLGVPTTNLRDCRPGAGTVFGPALRVFAAGPLAALGASLAAMAAARWAGLARVPGWALAGTAAAMLAVGGPRSASCLGFRPANCFLMDDLAVAQRPTDYGGLTRRLADEAALFLRRNRARPFLLFLSFLHVHTAHFADPGFAGRSLHGAYGDSVEEMDWGVGRVLAALDELGLARETLVYFTSDHGAHVEELGPRGERMGGSNGVFRGGKGNNWEGGVRVPCLVRWPRELSPGRVVAEPTSLMDVFPTVARLAGAELPGDRVIDGRDLMPLLRGDAQRSEHEFLFHYCNAYLQAVRWHNGSAVWKAFYFTPNFAPAGANGCFSTHVCLCAGPAHVTAHDPPLLFDLTRDPGERRPLTPEAEPRHREVLDAIDAAARAHRARLRPAPDQLAPRHLMWKPWLQLWGGGGAGGGAGAQDDSGHAHGDGSHAHDDPGHAQDRGDDDAHYGGHATTRTQATPR.

Residues 1-22 form the signal peptide; sequence MPRPRPLLLAVMAATLADIILA. Residues 24–192 lie on the Lumenal side of the membrane; that stretch reads DPAPAGPAPR…GTVFGPALRV (169 aa). Ca(2+) contacts are provided by aspartate 43 and aspartate 44. A glycan (N-linked (GlcNAc...) asparagine) is linked at asparagine 55. Cysteine 83 lines the Ca(2+) pocket. The active-site Nucleophile is cysteine 83. Position 83 is a 3-oxoalanine (Cys) (cysteine 83). Histidine 144 is a catalytic residue. Intrachain disulfides connect cysteine 149–cysteine 156 and cysteine 178–cysteine 250. A helical membrane pass occupies residues 193–216; the sequence is FAAGPLAALGASLAAMAAARWAGL. Over 217–220 the chain is Cytoplasmic; it reads ARVP. A helical membrane pass occupies residues 221 to 242; it reads GWALAGTAAAMLAVGGPRSASC. Residues 243-624 lie on the Lumenal side of the membrane; that stretch reads LGFRPANCFL…ATTRTQATPR (382 aa). 2 residues coordinate Ca(2+): aspartate 350 and histidine 351. 2 disulfides stabilise this stretch: cysteine 454–cysteine 495 and cysteine 487–cysteine 493. The N-linked (GlcNAc...) asparagine glycan is linked to asparagine 465. The tract at residues 572 to 624 is disordered; it reads GGAGGGAGAQDDSGHAHGDGSHAHDDPGHAQDRGDDDAHYGGHATTRTQATPR. Residues 583-611 show a composition bias toward basic and acidic residues; that stretch reads DSGHAHGDGSHAHDDPGHAQDRGDDDAHY.

It belongs to the sulfatase family. As to quaternary structure, homodimer. Ca(2+) is required as a cofactor. Post-translationally, the conversion to 3-oxoalanine (also known as C-formylglycine, FGly), of a serine or cysteine residue in prokaryotes and of a cysteine residue in eukaryotes, is critical for catalytic activity.

It is found in the microsome membrane. The protein resides in the endoplasmic reticulum membrane. It carries out the reaction dehydroepiandrosterone 3-sulfate + H2O = 3beta-hydroxyandrost-5-en-17-one + sulfate + H(+). The enzyme catalyses estrone 3-sulfate + H2O = estrone + sulfate + H(+). Its function is as follows. Catalyzes the conversion of sulfated steroid precursors, such as dehydroepiandrosterone sulfate (DHEA-S) and estrone sulfate to the free steroid. The protein is Steryl-sulfatase (Sts) of Mus musculus (Mouse).